A 399-amino-acid chain; its full sequence is Beta sliding clamp (399 aa).

Belongs to the beta sliding clamp family. In terms of assembly, forms a ring-shaped head-to-tail homodimer around DNA which binds and tethers DNA polymerases and other proteins to the DNA. The DNA replisome complex has a single clamp-loading complex (3 tau and 1 each of delta, delta', psi and chi subunits) which binds 3 Pol III cores (1 core on the leading strand and 2 on the lagging strand) each with a beta sliding clamp dimer. Additional proteins in the replisome are other copies of gamma, psi and chi, Ssb, DNA helicase and RNA primase.

The protein localises to the cytoplasm. Confers DNA tethering and processivity to DNA polymerases and other proteins. Acts as a clamp, forming a ring around DNA (a reaction catalyzed by the clamp-loading complex) which diffuses in an ATP-independent manner freely and bidirectionally along dsDNA. Initially characterized for its ability to contact the catalytic subunit of DNA polymerase III (Pol III), a complex, multichain enzyme responsible for most of the replicative synthesis in bacteria; Pol III exhibits 3'-5' exonuclease proofreading activity. The beta chain is required for initiation of replication as well as for processivity of DNA replication. This Mycolicibacterium paratuberculosis (strain ATCC BAA-968 / K-10) (Mycobacterium paratuberculosis) protein is Beta sliding clamp (dnaN).